Here is a 150-residue protein sequence, read N- to C-terminus: Large ribosomal subunit protein bL9 (150 aa).

The protein belongs to the bacterial ribosomal protein bL9 family.

Functionally, binds to the 23S rRNA. This Cupriavidus taiwanensis (strain DSM 17343 / BCRC 17206 / CCUG 44338 / CIP 107171 / LMG 19424 / R1) (Ralstonia taiwanensis (strain LMG 19424)) protein is Large ribosomal subunit protein bL9.